The primary structure comprises 198 residues: Twist-related protein 1 (198 aa).

Over residues 1-18 (MMQDVSSSPVSPADDSLS) the composition is skewed to low complexity. The disordered stretch occupies residues 1-101 (MMQDVSSSPV…GGGSPQSYEE (101 aa)). Residues 34 to 43 (RGGRKRRSSR) are compositionally biased toward basic residues. 2 stretches are compositionally biased toward gly residues: residues 46–64 (AGGG…GGDE) and 79–95 (GCGG…GGGS). Positions 104–155 (TQRVMANVRERQRTQSLNEAFAALRKIIPTLPSDKLSKIQTLKLAARYIDFL) constitute a bHLH domain. A sufficient for transactivation activity region spans residues 157 to 187 (QVLQSDELDSKMASCSYVAHERLSYAFSVWR).

In terms of assembly, efficient DNA binding requires dimerization with another bHLH protein. Homodimer or heterodimer with E proteins such as TCF3. ID1 binds preferentially to TCF3 but does not interact efficiently with TWIST1 so ID1 levels control the amount of TCF3 available to dimerize with TWIST and thus determine the type of dimer formed.

Its subcellular location is the nucleus. Its function is as follows. Acts as a transcriptional regulator. Inhibits myogenesis by sequestrating E proteins, inhibiting trans-activation by MEF2, and inhibiting DNA-binding by MYOD1 through physical interaction. This interaction probably involves the basic domains of both proteins. Also represses expression of pro-inflammatory cytokines such as TNFA and IL1B. Regulates cranial suture patterning and fusion. Activates transcription as a heterodimer with E proteins. Regulates gene expression differentially, depending on dimer composition. Homodimers induce expression of FGFR2 and POSTN while heterodimers repress FGFR2 and POSTN expression and induce THBS1 expression. Heterodimerization is also required for osteoblast differentiation. Represses the activity of the circadian transcriptional activator: NPAS2-BMAL1 heterodimer. This Eulemur fulvus fulvus (Brown lemur) protein is Twist-related protein 1 (TWIST1).